The following is a 276-amino-acid chain: Formamidopyrimidine-DNA glycosylase (276 aa).

The Schiff-base intermediate with DNA role is filled by proline 2. The active-site Proton donor is glutamate 3. Lysine 60 functions as the Proton donor; for beta-elimination activity in the catalytic mechanism. Positions 93 and 112 each coordinate DNA. The FPG-type zinc-finger motif lies at 240-274 (HVYGRKQQPCHHCDTAIEKTVVGGRGTHYCPNCQP). The active-site Proton donor; for delta-elimination activity is the arginine 264.

It belongs to the FPG family. Monomer. The cofactor is Zn(2+).

It catalyses the reaction Hydrolysis of DNA containing ring-opened 7-methylguanine residues, releasing 2,6-diamino-4-hydroxy-5-(N-methyl)formamidopyrimidine.. The catalysed reaction is 2'-deoxyribonucleotide-(2'-deoxyribose 5'-phosphate)-2'-deoxyribonucleotide-DNA = a 3'-end 2'-deoxyribonucleotide-(2,3-dehydro-2,3-deoxyribose 5'-phosphate)-DNA + a 5'-end 5'-phospho-2'-deoxyribonucleoside-DNA + H(+). In terms of biological role, involved in base excision repair of DNA damaged by oxidation or by mutagenic agents. Acts as a DNA glycosylase that recognizes and removes damaged bases. Has a preference for oxidized purines, such as 7,8-dihydro-8-oxoguanine (8-oxoG). Has AP (apurinic/apyrimidinic) lyase activity and introduces nicks in the DNA strand. Cleaves the DNA backbone by beta-delta elimination to generate a single-strand break at the site of the removed base with both 3'- and 5'-phosphates. The chain is Formamidopyrimidine-DNA glycosylase from Shouchella clausii (strain KSM-K16) (Alkalihalobacillus clausii).